Consider the following 188-residue polypeptide: Pyridoxal 5'-phosphate synthase subunit PdxT (188 aa).

46–48 provides a ligand contact to L-glutamine; that stretch reads GES. Catalysis depends on Cys78, which acts as the Nucleophile. L-glutamine-binding positions include Arg105 and 134 to 135; that span reads IR. Active-site charge relay system residues include His170 and Glu172.

Belongs to the glutaminase PdxT/SNO family. As to quaternary structure, in the presence of PdxS, forms a dodecamer of heterodimers. Only shows activity in the heterodimer.

It catalyses the reaction aldehydo-D-ribose 5-phosphate + D-glyceraldehyde 3-phosphate + L-glutamine = pyridoxal 5'-phosphate + L-glutamate + phosphate + 3 H2O + H(+). It carries out the reaction L-glutamine + H2O = L-glutamate + NH4(+). Its pathway is cofactor biosynthesis; pyridoxal 5'-phosphate biosynthesis. Functionally, catalyzes the hydrolysis of glutamine to glutamate and ammonia as part of the biosynthesis of pyridoxal 5'-phosphate. The resulting ammonia molecule is channeled to the active site of PdxS. This Thermotoga petrophila (strain ATCC BAA-488 / DSM 13995 / JCM 10881 / RKU-1) protein is Pyridoxal 5'-phosphate synthase subunit PdxT.